Consider the following 72-residue polypeptide: Thiostrepton (72 aa).

A propeptide spanning residues 1–55 is cleaved from the precursor; the sequence is MDATAIHERWSVMSNASIGQEIGVEGLTGLDVDALEISDYVDETLLDGEDLTVTM. The 4-(1-hydroxyethyl)-7-isoleucino-2-(threonin-O3-ylcarbonyl)-7,8-dihydroquinolin-8-ol (Ile-Thr) cross-link spans 56–67; sequence IASASCTTCICT. S58 bears the 2,3-didehydroalanine (Ser) mark. Positions 60-61 form a cross-link, thiazole-4-carboxylic acid (Ser-Cys); sequence SC. The 5-amino-piperideine-2,5-dicarboxylic acid (Ser-Cys) (with S-69) cross-link spans 60–68; sequence SCTTCICTC. Positions 60–69 form a cross-link, 5-amino-piperideine-2,5-dicarboxylic acid (Ser-Ser) (with C-68); sequence SCTTCICTCS. T63 carries the post-translational modification (Z)-2,3-didehydrobutyrine. The segment at residues 63-64 is a cross-link ((4S)-thiazoline-4-carboxylic acid (Thr-Cys)); the sequence is TC. I65 is modified ((3S,4R)-3,4-dihydroxyisoleucine). Positions 65–66 form a cross-link, thiazole-4-carboxylic acid (Ile-Cys); that stretch reads IC. A cross-link (thiazole-4-carboxylic acid (Thr-Cys)) is located at residues 67–68; the sequence is TC. The thiazole-4-carboxylic acid (Ser-Cys) cross-link spans 69–70; the sequence is SC. A 2,3-didehydroalanine (Ser) mark is found at S71 and S72. Serine amide is present on S72.

The protein belongs to the thiocillin family. In terms of processing, maturation of thiazole and oxazole containing antibiotics involves the enzymatic condensation of a Cys, Ser or Thr with the alpha-carbonyl of the preceding amino acid to form a thioether or ether bond, then dehydration to form a double bond with the alpha-amino nitrogen. Thiazoline or oxazoline ring are dehydrogenated to form thiazole or oxazole rings. Maturation of pyridinyl containing antibiotics involves the cross-linking of a Ser and a Cys-Ser pair usually separated by 7 or 8 residues along the peptide chain. The Ser residues are dehydrated to didehydroalanines, then bonded between their beta carbons. The alpha carbonyl of the Cys condenses with alpha carbon of the first Ser to form a pyridinyl ring. The ring may be multiply dehydrogenated to form a pyridine ring with loss of the amino nitrogen of the first Ser. Post-translationally, the amidation of Ser-72 probably does not occur by the same mechanism, oxidative cleavage of glycine, as in eukaryotes. In terms of processing, the structure of the 2,3-didehydrobutyrin is shown to be Z-isomer.

It is found in the secreted. Has bacteriocidal activity. Inhibits bacterial protein biosynthesis by acting on the elongation factor Tu (EF-Tu). This is Thiostrepton (tpdA) from Streptomyces azureus.